The sequence spans 207 residues: Ribosomal RNA large subunit methyltransferase E (207 aa).

Residues Gly60, Trp62, Asp80, Asp96, and Asp121 each contribute to the S-adenosyl-L-methionine site. Catalysis depends on Lys161, which acts as the Proton acceptor.

It belongs to the class I-like SAM-binding methyltransferase superfamily. RNA methyltransferase RlmE family.

The protein resides in the cytoplasm. It catalyses the reaction uridine(2552) in 23S rRNA + S-adenosyl-L-methionine = 2'-O-methyluridine(2552) in 23S rRNA + S-adenosyl-L-homocysteine + H(+). Specifically methylates the uridine in position 2552 of 23S rRNA at the 2'-O position of the ribose in the fully assembled 50S ribosomal subunit. The polypeptide is Ribosomal RNA large subunit methyltransferase E (Pseudomonas paraeruginosa (strain DSM 24068 / PA7) (Pseudomonas aeruginosa (strain PA7))).